The primary structure comprises 971 residues: MGTVNGEYEDFDAANRRAEVIDWLGGLLPEFDLPLDSSDEELRDYLINGEALCYVADKLMPGVLEGTWGGYASDQRSNVKKFLSVVAEMGLPGFGVKDLEEGSMSSIVECLLALKDNVATQLGGHISNSTAKTPIRRKLELRETDGPVLSVATPGKRYPKSQQRSPLLSGQKINEVVQFKHGTYTDLPAAKISEMLHSNSLDNAPTQSLLRVVNGILDESIERKRGEIPHRVVHLLRNVIQEIEHRIGIQADHIRNQNSIIKTREDKYRSKIKALETLVNGTNEENEMAINRLEVVKVEKSKIDEKRKLGEQDMIRLIREKENAENIIASLHQEMQVMNRMHEQFREQMETKARQMEEHLTLRAKEAEFCLMQSKKKVEEVEATSQLKSQLWSKKANIFQSFMNNQKLSIKDIKISSQSIKQEMYALQMTWRDEISNIGHDLKGLVDAAENYHKVLAENQKLFNEVQELKGNIRVYCRVRPFLPGQDGKLTAIDYIGENGEILIANPSKQGKEGYRMFKFNKVFGTHSSQAEVFSDIQPLIRSVLDGFNVCIFAYGQTGSGKTYTMSGPGTSREDWGVNYRALNDLFDISLSRKNAFSYEVGVQMVEIYNEQVRDLLSNDIAQKRLGIWSTSQPNGLVVPDASLHPVKSTSDVLDLMEIGQSNRAVGSTALNERSSRSHSILTVHVRGLDVKNGSTSRGCLHLIDLAGSERVERSEATGDRLKEAQHINKSLSALGDVIFSLAQKNAHVPYRNSKLTQVLQSSLGGQAKTLMFVQINPDIESYSETISTLKFAERVSGVELGAARSNREGKDIKELLEQVASLKDTIARKDMEIEQLQLLKSKSPNSMTDRNGSNLLRQSTSSTGLSSLPVASQQNQQLSGSVEAEAEDNASDDGCSVGETEYSPAGASETSAERAHKAPSRITRFFLTKNGQPSTSRPKPREVVPKTQGSMRPGTAQATGGSLAKPSKRR.

Residues 14 to 119 (ANRRAEVIDW…CLLALKDNVA (106 aa)) enclose the Calponin-homology (CH) domain. Positions 272–357 (IKALETLVNG…QMETKARQME (86 aa)) form a coiled coil. The Kinesin motor domain occupies 472–799 (NIRVYCRVRP…LKFAERVSGV (328 aa)). Residue 556–563 (GQTGSGKT) participates in ATP binding. Positions 809-844 (EGKDIKELLEQVASLKDTIARKDMEIEQLQLLKSKS) form a coiled coil. Polar residues predominate over residues 839 to 881 (LLKSKSPNSMTDRNGSNLLRQSTSSTGLSSLPVASQQNQQLSG). The interval 839–971 (LLKSKSPNSM…GSLAKPSKRR (133 aa)) is disordered.

Belongs to the TRAFAC class myosin-kinesin ATPase superfamily. Kinesin family. KIN-14 subfamily.

The sequence is that of Kinesin-like protein KIN-14C from Oryza sativa subsp. japonica (Rice).